A 91-amino-acid polypeptide reads, in one-letter code: DNA-directed RNA polymerase subunit Rpo5 (91 aa).

This sequence belongs to the archaeal Rpo5/eukaryotic RPB5 RNA polymerase subunit family. In terms of assembly, part of the RNA polymerase complex.

The protein resides in the cytoplasm. The catalysed reaction is RNA(n) + a ribonucleoside 5'-triphosphate = RNA(n+1) + diphosphate. DNA-dependent RNA polymerase (RNAP) catalyzes the transcription of DNA into RNA using the four ribonucleoside triphosphates as substrates. This is DNA-directed RNA polymerase subunit Rpo5 from Staphylothermus marinus (strain ATCC 43588 / DSM 3639 / JCM 9404 / F1).